The primary structure comprises 89 residues: Small ribosomal subunit protein uS14 (89 aa).

This sequence belongs to the universal ribosomal protein uS14 family. In terms of assembly, part of the 30S ribosomal subunit. Contacts proteins S3 and S10.

In terms of biological role, binds 16S rRNA, required for the assembly of 30S particles and may also be responsible for determining the conformation of the 16S rRNA at the A site. This is Small ribosomal subunit protein uS14 from Leuconostoc citreum (strain KM20).